Reading from the N-terminus, the 382-residue chain is Beta-lactamase CMY-1 (382 aa).

An N-terminal signal peptide occupies residues Met-1–Ala-23. Ser-88 serves as the catalytic Acyl-ester intermediate. Ser-88, Gln-144, Tyr-174, Asn-176, and Asn-363 together coordinate a beta-lactam.

The protein belongs to the class-C beta-lactamase family.

The catalysed reaction is a beta-lactam + H2O = a substituted beta-amino acid. With respect to regulation, inhibited by the beta-lactamase-blocking agent sulbactam. Its function is as follows. Class C beta-lactamase which confers resistance to penicillins and cephalosporins. Has benzylpenicillin- and cefalotin-hydrolyzing activities. Has weak cefuroxime, cefotaxime, cefoxitin, imipenem and oxacillin-hydrolyzing activities. The polypeptide is Beta-lactamase CMY-1 (Klebsiella pneumoniae).